Reading from the N-terminus, the 122-residue chain is Large ribosomal subunit protein eL34 (122 aa).

Belongs to the eukaryotic ribosomal protein eL34 family.

The chain is Large ribosomal subunit protein eL34 (rpl34) from Dictyostelium discoideum (Social amoeba).